A 419-amino-acid chain; its full sequence is D-amino acid dehydrogenase (419 aa).

Position 3–17 (3–17) interacts with FAD; that stretch reads VLILGGGVVGVTSAY.

Belongs to the DadA oxidoreductase family. Requires FAD as cofactor.

It catalyses the reaction a D-alpha-amino acid + A + H2O = a 2-oxocarboxylate + AH2 + NH4(+). The protein operates within amino-acid degradation; D-alanine degradation; NH(3) and pyruvate from D-alanine: step 1/1. Its function is as follows. Oxidative deamination of D-amino acids. The polypeptide is D-amino acid dehydrogenase (Methylobacterium radiotolerans (strain ATCC 27329 / DSM 1819 / JCM 2831 / NBRC 15690 / NCIMB 10815 / 0-1)).